The primary structure comprises 461 residues: Argininosuccinate lyase (461 aa).

The protein belongs to the lyase 1 family. Argininosuccinate lyase subfamily.

It is found in the cytoplasm. The catalysed reaction is 2-(N(omega)-L-arginino)succinate = fumarate + L-arginine. The protein operates within amino-acid biosynthesis; L-arginine biosynthesis; L-arginine from L-ornithine and carbamoyl phosphate: step 3/3. The sequence is that of Argininosuccinate lyase from Shewanella piezotolerans (strain WP3 / JCM 13877).